The sequence spans 387 residues: Alpha-sarcoglycan (387 aa).

The first 23 residues, 1–23, serve as a signal peptide directing secretion; the sequence is MAATLTWILLFVGLLAGLRDTKA. Residues 24 to 290 lie on the Extracellular side of the membrane; sequence QQTTLYPLVG…ATGRDFLADA (267 aa). N-linked (GlcNAc...) asparagine glycosylation is found at Asn174 and Asn246. The chain crosses the membrane as a helical span at residues 291–311; that stretch reads LVTLLVPLLVALLLTLLLAYI. Over 312 to 387 the chain is Cytoplasmic; sequence MCCRREGQLK…AQVPLILDQH (76 aa). Ser377 carries the post-translational modification Phosphoserine.

Belongs to the sarcoglycan alpha/epsilon family. As to quaternary structure, interacts with the syntrophin SNTA1. Cross-link to form 2 major subcomplexes: one consisting of SGCB, SGCD and SGCG and the other consisting of SGCB and SGCD. The association between SGCB and SGCG is particularly strong while SGCA is loosely associated with the other sarcoglycans. In terms of tissue distribution, strongly expressed in skeletal and heart muscle.

The protein resides in the cell membrane. Its subcellular location is the sarcolemma. The protein localises to the cytoplasm. It localises to the cytoskeleton. Its function is as follows. Component of the sarcoglycan complex, a subcomplex of the dystrophin-glycoprotein complex which forms a link between the F-actin cytoskeleton and the extracellular matrix. This chain is Alpha-sarcoglycan (SGCA), found in Mesocricetus auratus (Golden hamster).